Here is a 130-residue protein sequence, read N- to C-terminus: Probable 4-amino-4-deoxy-L-arabinose-phosphoundecaprenol flippase subunit ArnF (130 aa).

The Cytoplasmic segment spans residues M1–G4. The chain crosses the membrane as a helical span at residues W5–M25. Residues H26 to P44 lie on the Periplasmic side of the membrane. Residues L45–A65 traverse the membrane as a helical segment. At L66 to A74 the chain is on the cytoplasmic side. A helical membrane pass occupies residues Y75–F95. At N96 to R103 the chain is on the periplasmic side. Residues L104–K124 form a helical membrane-spanning segment. At G125–R130 the chain is on the cytoplasmic side.

The protein belongs to the ArnF family. As to quaternary structure, heterodimer of ArnE and ArnF.

Its subcellular location is the cell inner membrane. The protein operates within bacterial outer membrane biogenesis; lipopolysaccharide biosynthesis. Its function is as follows. Translocates 4-amino-4-deoxy-L-arabinose-phosphoundecaprenol (alpha-L-Ara4N-phosphoundecaprenol) from the cytoplasmic to the periplasmic side of the inner membrane. The polypeptide is Probable 4-amino-4-deoxy-L-arabinose-phosphoundecaprenol flippase subunit ArnF (Sodalis glossinidius (strain morsitans)).